The primary structure comprises 339 residues: Phenylalanine--tRNA ligase alpha subunit (339 aa).

Glu-247 provides a ligand contact to Mg(2+).

Belongs to the class-II aminoacyl-tRNA synthetase family. Phe-tRNA synthetase alpha subunit type 1 subfamily. As to quaternary structure, tetramer of two alpha and two beta subunits. The cofactor is Mg(2+).

It localises to the cytoplasm. The catalysed reaction is tRNA(Phe) + L-phenylalanine + ATP = L-phenylalanyl-tRNA(Phe) + AMP + diphosphate + H(+). The sequence is that of Phenylalanine--tRNA ligase alpha subunit (pheS) from Deinococcus radiodurans (strain ATCC 13939 / DSM 20539 / JCM 16871 / CCUG 27074 / LMG 4051 / NBRC 15346 / NCIMB 9279 / VKM B-1422 / R1).